The following is a 322-amino-acid chain: Germ cell-specific gene 1-like protein (322 aa).

At 1–8 the chain is on the cytoplasmic side; sequence MKTSRRGR. The chain crosses the membrane as a helical span at residues 9–29; that stretch reads ALLAVALNLLALLFATTAFLT. At 30 to 122 the chain is on the extracellular side; sequence TYWCQGTQRV…FIDLAPASEK (93 aa). The chain crosses the membrane as a helical span at residues 123–143; that stretch reads GVLWLSVVSEVLYILLLVVGF. Residues 144 to 163 are Cytoplasmic-facing; sequence SLMCLELLHSSSVIDGLKLN. Residues 164-184 traverse the membrane as a helical segment; that stretch reads AFAAVFTVLSGLLGMVAHMMY. At 185-207 the chain is on the extracellular side; that stretch reads TQVFQVTVSLGPEDWRPHSWDYG. A helical membrane pass occupies residues 208–228; the sequence is WSFCLAWGSFTCCMAASVTTL. Residues 229–322 lie on the Cytoplasmic side of the membrane; sequence NSYTKTVIEF…RQCWVLGHWV (94 aa). At serine 274 the chain carries Phosphoserine.

Belongs to the GSG1 family. Component of the inner core of AMPAR complexes. AMPAR complexes consist of an inner core made of 4 pore-forming GluA/GRIA proteins (GRIA1, GRIA2, GRIA3 and GRIA4) and 4 major auxiliary subunits arranged in a twofold symmetry. One of the two pairs of distinct binding sites is occupied either by CNIH2, CNIH3 or CACNG2, CACNG3. The other harbors CACNG2, CACNG3, CACNG4, CACNG8 or GSG1L. This inner core of AMPAR complexes is complemented by outer core constituents binding directly to the GluA/GRIA proteins at sites distinct from the interaction sites of the inner core constituents. Outer core constituents include at least PRRT1, PRRT2, CKAMP44/SHISA9, FRRS1L and NRN1. The proteins of the inner and outer core serve as a platform for other, more peripherally associated AMPAR constituents. Alone or in combination, these auxiliary subunits control the gating and pharmacology of the AMPAR complexes and profoundly impact their biogenesis and protein processing. As to expression, expressed in the brain (at protein level).

It localises to the cell membrane. The protein localises to the synapse. As a component of the inner core of AMPAR complexes, modifies AMPA receptor (AMPAR) gating. The sequence is that of Germ cell-specific gene 1-like protein (Gsg1l) from Rattus norvegicus (Rat).